The chain runs to 493 residues: Glycogen synthase 1 (493 aa).

K15 provides a ligand contact to ADP-alpha-D-glucose.

Belongs to the glycosyltransferase 1 family. Bacterial/plant glycogen synthase subfamily.

It carries out the reaction [(1-&gt;4)-alpha-D-glucosyl](n) + ADP-alpha-D-glucose = [(1-&gt;4)-alpha-D-glucosyl](n+1) + ADP + H(+). It participates in glycan biosynthesis; glycogen biosynthesis. Functionally, synthesizes alpha-1,4-glucan chains using ADP-glucose. This Methylococcus capsulatus (strain ATCC 33009 / NCIMB 11132 / Bath) protein is Glycogen synthase 1.